Reading from the N-terminus, the 148-residue chain is Receptor activity-modifying protein 1 (148 aa).

Positions 1 to 26 (MAPGLRGLPRRGLWLLLAHHLFMVTA) are cleaved as a signal peptide. Intrachain disulfides connect C27–C82, C40–C72, and C57–C104. At 27-118 (CRDPDYGTLI…RALRDPPNSI (92 aa)) the chain is on the extracellular side. Residues 119-140 (LCPFIVLPITVTLLMTALVVWR) traverse the membrane as a helical segment. Residues 141-148 (SKRTEGIV) lie on the Cytoplasmic side of the membrane.

Belongs to the RAMP family. In terms of assembly, heterodimer of CALCRL and RAMP1; the interaction induces allosteric modulation of CALCRL function and CGRP1/CALCA and CGRP2/CALCB ligand specificity. Heterodimer of CALCR and RAMP1; interaction forms the AMYR1 receptor complex for amylin/IAPP and CGRP1/CALCA ligands.

The protein resides in the cell membrane. Functionally, accessory protein that interacts with and modulates the function of G-protein coupled receptors including calcitonin gene-related peptide type 1 receptor (CALCRL) and calcitonin receptor (CALCR). Required for the transport of CALCRL to the plasma membrane. Together with CALCRL, form the receptor complex for the calcitonin gene-related peptides CGRP1/CALCA and CGRP2/CALCB. Together with CALCR, form the AMYR1 receptor complex for amylin/IAPP and CGRP1/CALCA. The chain is Receptor activity-modifying protein 1 from Rattus norvegicus (Rat).